The chain runs to 308 residues: Reticulon-like protein 1 (308 aa).

Composition is skewed to polar residues over residues 1–17 (MSEQ…SVTA) and 41–66 (PSTE…IQNI). Disordered regions lie at residues 1–22 (MSEQ…DVAA) and 41–92 (PSTE…CPVS). A glycan (N-linked (GlcNAc...) asparagine) is linked at Asn65. Residues 67–81 (SSSSSEPHHTSQSTP) show a composition bias toward low complexity. 2 N-linked (GlcNAc...) asparagine glycosylation sites follow: Asn113 and Asn135. The Reticulon domain maps to 127–308 (LWSVLTWKNT…TETINTTVNK (182 aa)). Transmembrane regions (helical) follow at residues 138 to 158 (CSFS…WINL), 166 to 186 (FRYV…ASNG), 233 to 253 (PILT…SGFL), and 255 to 275 (YKSL…LYVC). The N-linked (GlcNAc...) asparagine glycan is linked to Asn303.

Interacts with TTS1 and YOP1.

It localises to the endoplasmic reticulum membrane. The protein localises to the nucleus membrane. Its function is as follows. Required for the correct positioning of the cellular division plane by delimiting the actomyosin ring assembly at the cell equator. Overexpression causes cell lysis. This Schizosaccharomyces pombe (strain 972 / ATCC 24843) (Fission yeast) protein is Reticulon-like protein 1 (rtn1).